The chain runs to 162 residues: Beta-lactoglobulin (162 aa).

3 disulfide bridges follow: cysteine 66–cysteine 160, cysteine 106–cysteine 119, and cysteine 106–cysteine 121.

This sequence belongs to the calycin superfamily. Lipocalin family. Under physiological conditions beta-lactoglobulin exists as an equilibrium mixture of monomeric and dimeric forms. In terms of processing, alternate disulfide bonds occur in equal amounts.

Its subcellular location is the secreted. Its function is as follows. Lactoglobulin is the primary component of whey, it binds retinol and is probably involved in the transport of that molecule. This is Beta-lactoglobulin (LGB) from Ovis aries musimon (Mouflon).